Consider the following 161-residue polypeptide: RNA pyrophosphohydrolase (161 aa).

One can recognise a Nudix hydrolase domain in the interval 12–154 (PYRIGVGMVI…KRKLYKAVIN (143 aa)). Residues 46-67 (GGIILGETYSKAVLREMKEEIG) carry the Nudix box motif.

The protein belongs to the Nudix hydrolase family. RppH subfamily. Requires a divalent metal cation as cofactor.

Its function is as follows. Accelerates the degradation of transcripts by removing pyrophosphate from the 5'-end of triphosphorylated RNA, leading to a more labile monophosphorylated state that can stimulate subsequent ribonuclease cleavage. In Orientia tsutsugamushi (strain Boryong) (Rickettsia tsutsugamushi), this protein is RNA pyrophosphohydrolase.